A 225-amino-acid polypeptide reads, in one-letter code: 2-C-methyl-D-erythritol 4-phosphate cytidylyltransferase (225 aa).

It belongs to the IspD/TarI cytidylyltransferase family. IspD subfamily.

It catalyses the reaction 2-C-methyl-D-erythritol 4-phosphate + CTP + H(+) = 4-CDP-2-C-methyl-D-erythritol + diphosphate. It participates in isoprenoid biosynthesis; isopentenyl diphosphate biosynthesis via DXP pathway; isopentenyl diphosphate from 1-deoxy-D-xylulose 5-phosphate: step 2/6. In terms of biological role, catalyzes the formation of 4-diphosphocytidyl-2-C-methyl-D-erythritol from CTP and 2-C-methyl-D-erythritol 4-phosphate (MEP). The polypeptide is 2-C-methyl-D-erythritol 4-phosphate cytidylyltransferase (Cereibacter sphaeroides (strain KD131 / KCTC 12085) (Rhodobacter sphaeroides)).